The primary structure comprises 570 residues: Sulfite reductase [NADPH] hemoprotein beta-component (570 aa).

[4Fe-4S] cluster-binding residues include cysteine 434, cysteine 440, cysteine 479, and cysteine 483. Cysteine 483 contributes to the siroheme binding site.

Belongs to the nitrite and sulfite reductase 4Fe-4S domain family. As to quaternary structure, alpha(8)-beta(8). The alpha component is a flavoprotein, the beta component is a hemoprotein. Siroheme is required as a cofactor. Requires [4Fe-4S] cluster as cofactor.

The enzyme catalyses hydrogen sulfide + 3 NADP(+) + 3 H2O = sulfite + 3 NADPH + 4 H(+). It functions in the pathway sulfur metabolism; hydrogen sulfide biosynthesis; hydrogen sulfide from sulfite (NADPH route): step 1/1. In terms of biological role, component of the sulfite reductase complex that catalyzes the 6-electron reduction of sulfite to sulfide. This is one of several activities required for the biosynthesis of L-cysteine from sulfate. The polypeptide is Sulfite reductase [NADPH] hemoprotein beta-component (Salmonella schwarzengrund (strain CVM19633)).